The sequence spans 67 residues: Large ribosomal subunit protein bL35 (67 aa).

It belongs to the bacterial ribosomal protein bL35 family.

The polypeptide is Large ribosomal subunit protein bL35 (Anaeromyxobacter sp. (strain Fw109-5)).